A 122-amino-acid polypeptide reads, in one-letter code: Small ribosomal subunit protein uS13 (122 aa).

The disordered stretch occupies residues 99–122 (RGQRTHTNARTRKGPAKAIAGKKK).

It belongs to the universal ribosomal protein uS13 family. As to quaternary structure, part of the 30S ribosomal subunit. Forms a loose heterodimer with protein S19. Forms two bridges to the 50S subunit in the 70S ribosome.

Its function is as follows. Located at the top of the head of the 30S subunit, it contacts several helices of the 16S rRNA. In the 70S ribosome it contacts the 23S rRNA (bridge B1a) and protein L5 of the 50S subunit (bridge B1b), connecting the 2 subunits; these bridges are implicated in subunit movement. Contacts the tRNAs in the A and P-sites. In Rhodopseudomonas palustris (strain BisB5), this protein is Small ribosomal subunit protein uS13.